The chain runs to 348 residues: 2-methyl-6-phytyl-1,4-hydroquinone methyltransferase 2, chloroplastic (348 aa).

The disordered stretch occupies residues 1–48 (MAMASSAYAPAGGVGTHSAPGRIRPPRGLGFSTTTTKSRPLVLTRRGG). The N-terminal 59 residues, 1 to 59 (MAMASSAYAPAGGVGTHSAPGRIRPPRGLGFSTTTTKSRPLVLTRRGGGGGNISVARLR), are a transit peptide targeting the chloroplast. Residues 60–317 (CAASSSSAAA…PVNPITFLFR (258 aa)) are Chloroplast intermembrane-facing. The interval 125–134 (VVDVGGGTGF) is SAM motif I. The tract at residues 170–183 (VTIMEGDAEDLPFP) is SAM motif II. The segment at 211-224 (RVLRLGGVACMIGP) is SAM motif III. The chain crosses the membrane as a helical span at residues 318–338 (FLMGTICAAYYVLVPIYMWIK). Over 339–348 (DQIVPKGMPI) the chain is Stromal.

The protein belongs to the class I-like SAM-binding methyltransferase superfamily. MPBQ/MBSQ MT family.

Its subcellular location is the plastid. The protein localises to the chloroplast inner membrane. The enzyme catalyses 2-methyl-6-phytyl-1,4-benzene-1,4-diol + S-adenosyl-L-methionine = 2,3-dimethyl-6-phytylbenzene-1,4-diol + S-adenosyl-L-homocysteine + H(+). The catalysed reaction is 2-methyl-6-(all-trans-nonaprenyl)benzene-1,4-diol + S-adenosyl-L-methionine = plastoquinol-9 + S-adenosyl-L-homocysteine + H(+). It carries out the reaction 6-geranylgeranyl-2-methylbenzene-1,4-diol + S-adenosyl-L-methionine = 6-geranylgeranyl-2,3-dimethylbenzene-1,4-diol + S-adenosyl-L-homocysteine + H(+). It functions in the pathway cofactor biosynthesis; tocopherol biosynthesis. Its function is as follows. Involved in a key methylation step in both tocopherols (vitamin E) and plastoquinone synthesis. Catalyzes the conversion of 2-methyl-6-phytyl-1,4-hydroquinone (MPBQ) to 2,3-dimethyl-6-phytyl-1,4-hydroquinone (DMPQ, a substrate for tocopherol cyclase), and 2-methyl-6-solanyl-1,4-benzoquinone (MSBQ) to plastoquinone. The chain is 2-methyl-6-phytyl-1,4-hydroquinone methyltransferase 2, chloroplastic from Oryza sativa subsp. japonica (Rice).